Consider the following 296-residue polypeptide: Acetylglutamate kinase (296 aa).

Residues 69–70 (GG), Arg91, and Asn193 contribute to the substrate site.

It belongs to the acetylglutamate kinase family. ArgB subfamily.

It is found in the cytoplasm. It carries out the reaction N-acetyl-L-glutamate + ATP = N-acetyl-L-glutamyl 5-phosphate + ADP. Its pathway is amino-acid biosynthesis; L-arginine biosynthesis; N(2)-acetyl-L-ornithine from L-glutamate: step 2/4. Its function is as follows. Catalyzes the ATP-dependent phosphorylation of N-acetyl-L-glutamate. The sequence is that of Acetylglutamate kinase from Paracidovorax citrulli (strain AAC00-1) (Acidovorax citrulli).